Reading from the N-terminus, the 130-residue chain is Lysozyme C (130 aa).

The region spanning 2 to 130 is the C-type lysozyme domain; it reads KVYGRCELAA…VNVWIRGCRL (129 aa). 4 disulfide bridges follow: C7–C128, C31–C116, C65–C81, and C77–C95. Active-site residues include E36 and D53.

Belongs to the glycosyl hydrolase 22 family. As to quaternary structure, monomer.

The protein localises to the secreted. It carries out the reaction Hydrolysis of (1-&gt;4)-beta-linkages between N-acetylmuramic acid and N-acetyl-D-glucosamine residues in a peptidoglycan and between N-acetyl-D-glucosamine residues in chitodextrins.. Its function is as follows. Lysozymes have primarily a bacteriolytic function; those in tissues and body fluids are associated with the monocyte-macrophage system and enhance the activity of immunoagents. This Phasianus versicolor (Green pheasant) protein is Lysozyme C (LYZ).